Reading from the N-terminus, the 30-residue chain is Snaclec coagulation factor IX/factor X-binding protein subunit B (30 aa).

The cysteines at positions 2 and 13 are disulfide-linked. Residues 9-30 (YEGHCYRVFTEPQNWADAEKFC) form the C-type lectin domain.

The protein belongs to the snaclec family. Heterodimer of subunits A and B; disulfide-linked. In terms of processing, glycosylated. In terms of tissue distribution, expressed by the venom gland.

The protein localises to the secreted. Anticoagulant protein which binds to the gamma-carboxyglutamic acid-domain regions of factors IX (F9) and factor X (F10) in the presence of calcium with a 1 to 1 stoichiometry. The polypeptide is Snaclec coagulation factor IX/factor X-binding protein subunit B (Bothrops jararaca (Jararaca)).